Consider the following 120-residue polypeptide: Glycine cleavage system H protein (120 aa).

The Lipoyl-binding domain occupies 17–99 (VATVGITAHA…QGDGWLYRLK (83 aa)). Lys58 carries the N6-lipoyllysine modification.

Belongs to the GcvH family. As to quaternary structure, the glycine cleavage system is composed of four proteins: P, T, L and H. The cofactor is (R)-lipoate.

In terms of biological role, the glycine cleavage system catalyzes the degradation of glycine. The H protein shuttles the methylamine group of glycine from the P protein to the T protein. The protein is Glycine cleavage system H protein of Methylorubrum extorquens (strain PA1) (Methylobacterium extorquens).